The sequence spans 479 residues: Fibrinogen beta chain (479 aa).

The first 18 residues, 1–18, serve as a signal peptide directing secretion; sequence MRHLWLLLLSVSLVQTQA. Residues 20–82 form a disordered region; sequence TTDSDKVDLS…VERKPPDAGG (63 aa). Positions 33 to 35 are beta-chain polymerization, binding distal domain of another fibrin; it reads GHR. 2 stretches are compositionally biased toward basic and acidic residues: residues 35–45 and 64–78; these read RPVDRRKEEPP and AKVD…RKPP. 2 disulfide bridges follow: cysteine 219–cysteine 304 and cysteine 229–cysteine 258. In terms of domain architecture, Fibrinogen C-terminal spans 220 to 476; sequence NIPVVSGKEC…RMSMKIRPVF (257 aa). Residue asparagine 382 is glycosylated (N-linked (GlcNAc...) asparagine). A disulfide bond links cysteine 412 and cysteine 425.

As to quaternary structure, heterohexamer; disulfide linked. Contains 2 sets of 3 non-identical chains (alpha, beta and gamma). The 2 heterotrimers are in head to head conformation with the N-termini in a small central domain. Post-translationally, conversion of fibrinogen to fibrin is triggered by thrombin, which cleaves fibrinopeptides A and B from alpha and beta chains, and thus exposes the N-terminal polymerization sites responsible for the formation of the soft clot.

It localises to the secreted. Its function is as follows. Cleaved by the protease thrombin to yield monomers which, together with fibrinogen alpha (FGA) and fibrinogen gamma (FGG), polymerize to form an insoluble fibrin matrix. Fibrin has a major function in hemostasis as one of the primary components of blood clots. In addition, functions during the early stages of wound repair to stabilize the lesion and guide cell migration during re-epithelialization. Was originally thought to be essential for platelet aggregation, based on in vitro studies using anticoagulated blood. However subsequent studies have shown that it is not absolutely required for thrombus formation in vivo. Enhances expression of SELP in activated platelets. Maternal fibrinogen is essential for successful pregnancy. Fibrin deposition is also associated with infection, where it protects against IFNG-mediated hemorrhage. May also facilitate the antibacterial immune response via both innate and T-cell mediated pathways. The chain is Fibrinogen beta chain (Fgb) from Rattus norvegicus (Rat).